The primary structure comprises 893 residues: AP-4 complex accessory subunit RUSC1 (893 aa).

Disordered stretches follow at residues E31–E223, E237–S332, S339–R358, and L366–A444. A compositionally biased stretch (polar residues) spans H77 to P87. Low complexity-rich tracts occupy residues S95 to P117 and P149 to S165. Over residues S177–D187 the composition is skewed to polar residues. Residues E237–E257 are compositionally biased toward basic and acidic residues. Pro residues-rich tracts occupy residues Q373–P382 and P390–P399. Positions M463–N598 are interaction with TRAF6. The RUN domain occupies D515–E659. Positions T599–P665 are interaction with IKBKG. Disordered regions lie at residues R700–S721 and H751–R772. 2 stretches are compositionally biased toward low complexity: residues T702–S714 and T754–P770. The 59-residue stretch at Q835–L893 folds into the SH3 domain.

In terms of assembly, associated component of the adapter-like complex 4 (AP-4). Interacts with IKBKG and TRAF6. Interacts with F-actin, acetylated actin, TUBB3, STX1A, KIF5B and KLC1. Phosphorylated on serine residues following nuclear translocation. Post-translationally, polyubiquitinated; polyubiquitination involves TRAF6. As to expression, expressed in brain, brain stem and spinal cord (at protein level).

The protein resides in the cytoplasm. It localises to the nucleus. It is found in the cytoskeleton. Its subcellular location is the cytoplasmic vesicle. The protein localises to the early endosome. The protein resides in the postsynaptic density. It localises to the golgi apparatus. Its function is as follows. Associates with the adapter-like complex 4 (AP-4) and may therefore play a role in vesicular trafficking of proteins at the trans-Golgi network. Signaling adapter which plays a role in neuronal differentiation. Involved in regulation of NGF-dependent neurite outgrowth. May play a role in neuronal vesicular trafficking, specifically involving pre-synaptic membrane proteins. Seems to be involved in signaling pathways that are regulated by the prolonged activation of MAPK. Can regulate the polyubiquitination of IKBKG and thus may be involved in regulation of the NF-kappa-B pathway. The sequence is that of AP-4 complex accessory subunit RUSC1 from Mus musculus (Mouse).